Reading from the N-terminus, the 677-residue chain is Methionine--tRNA ligase (677 aa).

The 'HIGH' region motif lies at 15-25; that stretch reads PYANGSIHLGH. Zn(2+)-binding residues include Cys146, Cys149, Cys159, and Cys162. The 'KMSKS' region signature appears at 333-337; that stretch reads KMSKS. Lys336 is an ATP binding site. The region spanning 575 to 677 is the tRNA-binding domain; the sequence is DFAKVDLRVA…DGAKPGQQVK (103 aa).

The protein belongs to the class-I aminoacyl-tRNA synthetase family. MetG type 1 subfamily. As to quaternary structure, homodimer. Requires Zn(2+) as cofactor.

The protein resides in the cytoplasm. The catalysed reaction is tRNA(Met) + L-methionine + ATP = L-methionyl-tRNA(Met) + AMP + diphosphate. Functionally, is required not only for elongation of protein synthesis but also for the initiation of all mRNA translation through initiator tRNA(fMet) aminoacylation. The sequence is that of Methionine--tRNA ligase from Salmonella schwarzengrund (strain CVM19633).